The chain runs to 151 residues: Deoxyuridine 5'-triphosphate nucleotidohydrolase (151 aa).

Substrate is bound by residues 69-71, asparagine 82, and 86-88; these read RSG and TID.

Belongs to the dUTPase family. Requires Mg(2+) as cofactor.

It catalyses the reaction dUTP + H2O = dUMP + diphosphate + H(+). Its pathway is pyrimidine metabolism; dUMP biosynthesis; dUMP from dCTP (dUTP route): step 2/2. This enzyme is involved in nucleotide metabolism: it produces dUMP, the immediate precursor of thymidine nucleotides and it decreases the intracellular concentration of dUTP so that uracil cannot be incorporated into DNA. The polypeptide is Deoxyuridine 5'-triphosphate nucleotidohydrolase (Rhodospirillum centenum (strain ATCC 51521 / SW)).